A 550-amino-acid chain; its full sequence is Calcyphosin-2 (550 aa).

Disordered regions lie at residues 1-20 (MVPP…DNFS) and 175-198 (ISDP…DSER). The span at 181–190 (DLNTKNQESS) shows a compositional bias: polar residues. 3 consecutive EF-hand domains span residues 379–414 (RILT…FHLE), 415–452 (VSEQ…EMNE), and 453–488 (YRKS…KKHP). D466, N468, T470, and D477 together coordinate Ca(2+).

The protein is Calcyphosin-2 (Caps2) of Mus musculus (Mouse).